Reading from the N-terminus, the 190-residue chain is Xanthine phosphoribosyltransferase (190 aa).

Positions 20 and 27 each coordinate xanthine. Ala-128–Ala-132 provides a ligand contact to 5-phospho-alpha-D-ribose 1-diphosphate. Lys-156 contacts xanthine.

It belongs to the purine/pyrimidine phosphoribosyltransferase family. Xpt subfamily. In terms of assembly, homodimer.

It is found in the cytoplasm. It catalyses the reaction XMP + diphosphate = xanthine + 5-phospho-alpha-D-ribose 1-diphosphate. It participates in purine metabolism; XMP biosynthesis via salvage pathway; XMP from xanthine: step 1/1. In terms of biological role, converts the preformed base xanthine, a product of nucleic acid breakdown, to xanthosine 5'-monophosphate (XMP), so it can be reused for RNA or DNA synthesis. The protein is Xanthine phosphoribosyltransferase of Pseudomonas putida (strain ATCC 700007 / DSM 6899 / JCM 31910 / BCRC 17059 / LMG 24140 / F1).